We begin with the raw amino-acid sequence, 110 residues long: Serum amyloid A protein (110 aa).

The tract at residues 73 to 110 (GGSGRGAEDSRADQAANEWGRSGKDPNHFRPHGLPDKY) is disordered. Residues 93 to 110 (RSGKDPNHFRPHGLPDKY) show a composition bias toward basic and acidic residues.

The protein belongs to the SAA family. Post-translationally, this protein is the precursor of amyloid protein A, which is formed by the removal of residues from the C-terminal end. Expressed by the liver; secreted in plasma.

Major acute phase reactant. Apolipoprotein of the HDL complex. This Equus caballus (Horse) protein is Serum amyloid A protein (SAA1).